Reading from the N-terminus, the 301-residue chain is Troponin T, cardiac muscle (301 aa).

Acidic residues predominate over residues 1-72 (MSDAEEVVEE…EAKDAEEGPV (72 aa)). 2 disordered regions span residues 1–97 (MSDA…DGER) and 125–224 (NRKK…KKKI). The residue at position 2 (serine 2) is an N-acetylserine. Serine 2 carries the phosphoserine; by CK2 modification. Basic and acidic residues-rich tracts occupy residues 125–186 (NRKK…DEAR) and 206–224 (QTER…KKKI). Threonine 207 is subject to Phosphothreonine; by PKC/PRKCA. A Phosphoserine; by PKC/PRKCA modification is found at serine 211. Threonine 216 carries the post-translational modification Phosphothreonine; by PKC/PRKCA and RAF1. Phosphothreonine; by PKC/PRKCA is present on threonine 297.

This sequence belongs to the troponin T family. Phosphorylation at Thr-216 by PRKCA induces significant reduction in myofilament calcium sensitivity and actomyosin ATPase activity.

Functionally, troponin T is the tropomyosin-binding subunit of troponin, the thin filament regulatory complex which confers calcium-sensitivity to striated muscle actomyosin ATPase activity. The sequence is that of Troponin T, cardiac muscle (Tnnt2) from Mus musculus (Mouse).